Here is a 120-residue protein sequence, read N- to C-terminus: UPF0102 protein CBU_1742 (120 aa).

This sequence belongs to the UPF0102 family.

The protein is UPF0102 protein CBU_1742 of Coxiella burnetii (strain RSA 493 / Nine Mile phase I).